The following is a 138-amino-acid chain: Basic phospholipase A2 homolog Ts-K49b (138 aa).

An N-terminal signal peptide occupies residues 1 to 16 (MRTLWIMAVLLVGVEG). Disulfide bonds link cysteine 42-cysteine 131, cysteine 44-cysteine 60, cysteine 65-cysteine 138, cysteine 66-cysteine 104, cysteine 73-cysteine 97, and cysteine 91-cysteine 102. The important for membrane-damaging activities in eukaryotes and bacteria; heparin-binding stretch occupies residues 121–133 (KKKKINLKLFCKK).

Expressed by the venom gland.

Its subcellular location is the secreted. Functionally, snake venom phospholipase A2 homolog that lacks catalytic activity. It shows myotoxic and weak anticoagulant activities. A model of myotoxic mechanism has been proposed: an apo Lys49-PLA2 is activated by the entrance of a hydrophobic molecule (e.g. fatty acid) at the hydrophobic channel of the protein leading to a reorientation of a monomer. This reorientation causes a transition between 'inactive' to 'active' states, causing alignment of C-terminal and membrane-docking sites (MDoS) side-by-side and putting the membrane-disruption sites (MDiS) in the same plane, exposed to solvent and in a symmetric position for both monomers. The MDoS region stabilizes the toxin on membrane by the interaction of charged residues with phospholipid head groups. Subsequently, the MDiS region destabilizes the membrane with penetration of hydrophobic residues. This insertion causes a disorganization of the membrane, allowing an uncontrolled influx of ions (i.e. calcium and sodium), and eventually triggering irreversible intracellular alterations and cell death. The polypeptide is Basic phospholipase A2 homolog Ts-K49b (Trimeresurus stejnegeri (Chinese green tree viper)).